We begin with the raw amino-acid sequence, 93 residues long: Protein S100-A5 (93 aa).

EF-hand domains follow at residues Met12 to Lys47 and Met48 to Ala83. The Ca(2+) site is built by Thr28, Glu33, Asp61, Asn63, Asp65, Glu67, and Glu72.

The protein belongs to the S-100 family. In terms of assembly, homodimer.

Functionally, binds calcium, zinc and copper. One subunit can simultaneously bind 2 calcium ions or 2 copper ions plus 1 zinc ion. Calcium and copper ions compete for the same binding sites. This chain is Protein S100-A5 (S100a5), found in Mus musculus (Mouse).